A 137-amino-acid polypeptide reads, in one-letter code: Large ribosomal subunit protein uL16 (137 aa).

Over residues 1 to 13 (MLQPSRRKYRKEQ) the composition is skewed to basic residues. Positions 1–22 (MLQPSRRKYRKEQKGRNTGLAT) are disordered.

This sequence belongs to the universal ribosomal protein uL16 family. In terms of assembly, part of the 50S ribosomal subunit.

Binds 23S rRNA and is also seen to make contacts with the A and possibly P site tRNAs. The sequence is that of Large ribosomal subunit protein uL16 from Azoarcus sp. (strain BH72).